The primary structure comprises 314 residues: Ribose-phosphate pyrophosphokinase (314 aa).

Residues 37 to 39 (DGE) and 96 to 97 (RQ) contribute to the ATP site. The Mg(2+) site is built by H131 and D170. K194 is an active-site residue. D-ribose 5-phosphate is bound by residues R196, D220, and 224–228 (DTGGT).

This sequence belongs to the ribose-phosphate pyrophosphokinase family. Class I subfamily. As to quaternary structure, homohexamer. Mg(2+) serves as cofactor.

It is found in the cytoplasm. It carries out the reaction D-ribose 5-phosphate + ATP = 5-phospho-alpha-D-ribose 1-diphosphate + AMP + H(+). It functions in the pathway metabolic intermediate biosynthesis; 5-phospho-alpha-D-ribose 1-diphosphate biosynthesis; 5-phospho-alpha-D-ribose 1-diphosphate from D-ribose 5-phosphate (route I): step 1/1. Its function is as follows. Involved in the biosynthesis of the central metabolite phospho-alpha-D-ribosyl-1-pyrophosphate (PRPP) via the transfer of pyrophosphoryl group from ATP to 1-hydroxyl of ribose-5-phosphate (Rib-5-P). This chain is Ribose-phosphate pyrophosphokinase, found in Vibrio parahaemolyticus serotype O3:K6 (strain RIMD 2210633).